Here is a 99-residue protein sequence, read N- to C-terminus: Large ribosomal subunit protein eL21 (99 aa).

Residues 1 to 14 (MPNSNGPLSNSGGK) show a composition bias toward polar residues. The disordered stretch occupies residues 1–38 (MPNSNGPLSNSGGKLQNDPRDRGTSPPQRAIADYDDGE).

This sequence belongs to the eukaryotic ribosomal protein eL21 family.

In Halobacterium salinarum (strain ATCC 29341 / DSM 671 / R1), this protein is Large ribosomal subunit protein eL21.